Consider the following 472-residue polypeptide: Lycopene beta cyclase, chloroplastic (472 aa).

Residues 1–25 (MDALLTSPFIPLKKPSHNRKSNTTT) constitute a chloroplast transit peptide. The tract at residues 1 to 27 (MDALLTSPFIPLKKPSHNRKSNTTTAS) is disordered. NAD(+) is bound at residue 62–90 (LAVVGGGPAGLAVAKRVSDAGLSVCSIDP).

It belongs to the lycopene cyclase family. In terms of tissue distribution, expressed in flower buds and lips. Detected in roots and leaves.

The protein localises to the plastid. Its subcellular location is the chloroplast. It catalyses the reaction a carotenoid psi-end group = a carotenoid beta-end derivative. The protein operates within carotenoid biosynthesis; beta-carotene biosynthesis. It participates in carotenoid biosynthesis; beta-zeacarotene biosynthesis. Functionally, catalyzes the double cyclization reaction which converts lycopene to beta-carotene and neurosporene to beta-zeacarotene. In Oncidium hybrid cultivar (Orchid), this protein is Lycopene beta cyclase, chloroplastic (LCY-B).